Here is a 122-residue protein sequence, read N- to C-terminus: Large ribosomal subunit protein uL14c (122 aa).

This sequence belongs to the universal ribosomal protein uL14 family. As to quaternary structure, part of the 50S ribosomal subunit.

The protein resides in the plastid. Its subcellular location is the chloroplast. Its function is as follows. Binds to 23S rRNA. The chain is Large ribosomal subunit protein uL14c from Arabis hirsuta (Hairy rock-cress).